A 729-amino-acid chain; its full sequence is Ribosomal RNA large subunit methyltransferase K/L (729 aa).

Residues 47–158 (TFYRLCLWSR…KNELTLALDL (112 aa)) form the THUMP domain.

Belongs to the methyltransferase superfamily. RlmKL family.

The protein resides in the cytoplasm. It carries out the reaction guanosine(2445) in 23S rRNA + S-adenosyl-L-methionine = N(2)-methylguanosine(2445) in 23S rRNA + S-adenosyl-L-homocysteine + H(+). It catalyses the reaction guanosine(2069) in 23S rRNA + S-adenosyl-L-methionine = N(2)-methylguanosine(2069) in 23S rRNA + S-adenosyl-L-homocysteine + H(+). Its function is as follows. Specifically methylates the guanine in position 2445 (m2G2445) and the guanine in position 2069 (m7G2069) of 23S rRNA. In Dichelobacter nodosus (strain VCS1703A), this protein is Ribosomal RNA large subunit methyltransferase K/L.